A 300-amino-acid polypeptide reads, in one-letter code: Glycine--tRNA ligase alpha subunit (300 aa).

This sequence belongs to the class-II aminoacyl-tRNA synthetase family. In terms of assembly, tetramer of two alpha and two beta subunits.

The protein resides in the cytoplasm. The catalysed reaction is tRNA(Gly) + glycine + ATP = glycyl-tRNA(Gly) + AMP + diphosphate. This chain is Glycine--tRNA ligase alpha subunit (glyQ), found in Buchnera aphidicola subsp. Baizongia pistaciae (strain Bp).